The sequence spans 239 residues: MINVLIIDDDAMVAELNRRYVAQIPGFQCCGTASTLEKAKEIIFNSDAPIDLILLDIYMQKENGLDLLPVLHNARCKSDVIVISSAADAATIKDSLHYGVVDYLIKPFQASRFEEALTGWRQKKMALEKHQYYDQAELDQLIHGSSSNEQDPRRLPKGLTPQTLRTLCQWIDAHQDYEFSTDELANEVNISRVSCRKYLIWLVNCHILFTSIHYGVTGRPVYRYRIQAEHYSLLKQYCQ.

The Response regulatory domain maps to Asn3–Arg121. Residue Asp56 is modified to 4-aspartylphosphate. Positions Thr181 to Ile200 form a DNA-binding region, H-T-H motif.

Phosphorylated and activated by DcuS.

Its subcellular location is the cytoplasm. Functionally, member of the two-component regulatory system DcuR/DcuS. Involved in the C4-dicarboxylate-stimulated regulation of the genes encoding the anaerobic fumarate respiratory system (frdABCD; nuoAN; dcuB; dcuC; sdhCDAB; etc.). Weakly regulates the aerobic C4-dicarboxylate transporter dctA. The protein is Transcriptional regulatory protein DcuR (dcuR) of Shigella flexneri.